Consider the following 95-residue polypeptide: Putative septation protein SpoVG (95 aa).

The protein belongs to the SpoVG family.

Could be involved in septation. The polypeptide is Putative septation protein SpoVG (Clostridium acetobutylicum (strain ATCC 824 / DSM 792 / JCM 1419 / IAM 19013 / LMG 5710 / NBRC 13948 / NRRL B-527 / VKM B-1787 / 2291 / W)).